Reading from the N-terminus, the 410-residue chain is Peptidase T (410 aa).

Residue H79 participates in Zn(2+) binding. D81 is a catalytic residue. A Zn(2+)-binding site is contributed by D142. Catalysis depends on E176, which acts as the Proton acceptor. Positions 177, 199, and 381 each coordinate Zn(2+).

The protein belongs to the peptidase M20B family. Zn(2+) serves as cofactor.

The protein localises to the cytoplasm. It carries out the reaction Release of the N-terminal residue from a tripeptide.. In terms of biological role, cleaves the N-terminal amino acid of tripeptides. In Listeria monocytogenes serotype 4b (strain F2365), this protein is Peptidase T.